The following is a 494-amino-acid chain: ATP synthase subunit alpha, chloroplastic (494 aa).

170–177 serves as a coordination point for ATP; sequence GDRQTGKT.

It belongs to the ATPase alpha/beta chains family. As to quaternary structure, F-type ATPases have 2 components, CF(1) - the catalytic core - and CF(0) - the membrane proton channel. CF(1) has five subunits: alpha(3), beta(3), gamma(1), delta(1), epsilon(1). CF(0) has four main subunits: a, b, b' and c.

It is found in the plastid. The protein resides in the chloroplast thylakoid membrane. The enzyme catalyses ATP + H2O + 4 H(+)(in) = ADP + phosphate + 5 H(+)(out). Produces ATP from ADP in the presence of a proton gradient across the membrane. The alpha chain is a regulatory subunit. In Pinus thunbergii (Japanese black pine), this protein is ATP synthase subunit alpha, chloroplastic.